A 388-amino-acid polypeptide reads, in one-letter code: Leucine aminopeptidase 1 (388 aa).

An N-terminal signal peptide occupies residues 1-19 (MKVLTAIALSAIAFTGAVA). Positions 20 to 88 (AVITQEAFLN…YPTLHSASYV (69 aa)) are excised as a propeptide. N-linked (GlcNAc...) asparagine glycosylation is found at Asn-106 and Asn-180. Zn(2+)-binding residues include His-188 and Asp-207. The N-linked (GlcNAc...) asparagine glycan is linked to Asn-232. Residues Glu-246 and Asp-273 each coordinate Zn(2+). A disulfide bridge links Cys-322 with Cys-326. His-355 is a Zn(2+) binding site.

This sequence belongs to the peptidase M28 family. M28E subfamily. In terms of assembly, monomer. Zn(2+) is required as a cofactor.

Its subcellular location is the secreted. Its function is as follows. Extracellular aminopeptidase that allows assimilation of proteinaceous substrates and which contributes to pathogenicity. This chain is Leucine aminopeptidase 1 (lap1), found in Aspergillus fumigatus (strain CBS 144.89 / FGSC A1163 / CEA10) (Neosartorya fumigata).